The sequence spans 426 residues: Cephalotocin receptor 2 (426 aa).

Residues 1–51 lie on the Extracellular side of the membrane; it reads MYQAMEVESTSPSGFFLDFYTQSTIPTTDFLNNTNSSHPIRDEKLVKIEIA. Asn32 and Asn35 each carry an N-linked (GlcNAc...) asparagine glycan. Residues 52–72 traverse the membrane as a helical segment; it reads VLGTCFTLAIINNLCVLLVLL. Residues 73–84 lie on the Cytoplasmic side of the membrane; it reads WRRKKVRRMQMF. A helical transmembrane segment spans residues 85 to 105; the sequence is ILHLSIADLIVAFFNILPQLI. Topologically, residues 106-120 are extracellular; that stretch reads WDITFRFMAGDAMCR. An intrachain disulfide couples Cys119 to Cys198. The chain crosses the membrane as a helical span at residues 121-141; the sequence is FIKYAQMFSLYLSTYILIMTA. Over 142–165 the chain is Cytoplasmic; sequence VDRYRAICHPLSNQTWTPCMVYCK. A helical membrane pass occupies residues 166 to 186; that stretch reads IFIAYAIATIFSIPQAILFQM. Residues 187–208 are Extracellular-facing; that stretch reads QEVNEGSGIYDCWVHFEPAWVL. Residues 209 to 229 traverse the membrane as a helical segment; sequence TAYALYIFFALYLIPILILFF. Topologically, residues 230 to 288 are cytoplasmic; that stretch reads TYGSICYTIWAKYRHAIKTKKDANTRYPQRRKKKGVILRTHSVHGFSKAKLNSVKLTFA. Residues 289 to 309 traverse the membrane as a helical segment; it reads VIVTYIICWSPFFVSQIWWLF. At 310-319 the chain is on the extracellular side; it reads DETVVGNAGV. A helical transmembrane segment spans residues 320–340; the sequence is VVILLMACLNSCTNPWIYLIF. Residues 341-426 lie on the Cytoplasmic side of the membrane; the sequence is NRNYISNVLP…DQFIYSDKTT (86 aa). Positions 373-426 are disordered; that stretch reads GSVRRDSRKTSDPKRISESRRISDARRISGKTQKNNSSSPRKTSDQFIYSDKTT. Residues 375–399 show a composition bias toward basic and acidic residues; it reads VRRDSRKTSDPKRISESRRISDARR. Residues 402-426 are compositionally biased toward polar residues; sequence GKTQKNNSSSPRKTSDQFIYSDKTT.

It belongs to the G-protein coupled receptor 1 family. Vasopressin/oxytocin receptor subfamily. In terms of tissue distribution, present in various peripheral tissues with highest expression in branchia and vas deferens. Very low expression detected in nervous system.

It localises to the cell membrane. Functionally, acts as a receptor for cephalotocin. The polypeptide is Cephalotocin receptor 2 (Octopus vulgaris (Common octopus)).